The chain runs to 415 residues: Trehalose synthase (415 aa).

Belongs to the glycosyltransferase group 1 family. Glycosyltransferase 4 subfamily. In terms of assembly, homodimer. It depends on Mg(2+) as a cofactor.

It carries out the reaction an NDP-alpha-D-glucose + D-glucose = alpha,alpha-trehalose + a ribonucleoside 5'-diphosphate + H(+). In terms of biological role, synthesizes trehalose from ADP-, UDP- or GDP-glucose and glucose. In Pyrococcus horikoshii (strain ATCC 700860 / DSM 12428 / JCM 9974 / NBRC 100139 / OT-3), this protein is Trehalose synthase.